We begin with the raw amino-acid sequence, 192 residues long: Large ribosomal subunit protein uL5 (192 aa).

This sequence belongs to the universal ribosomal protein uL5 family. Part of the 50S ribosomal subunit; contacts the 5S rRNA and probably tRNA. Forms a bridge to the 30S subunit in the 70S ribosome.

This is one of the proteins that bind and probably mediate the attachment of the 5S RNA into the large ribosomal subunit, where it forms part of the central protuberance. In the 70S ribosome it contacts protein S13 of the 30S subunit (bridge B1b), connecting the 2 subunits; this bridge is implicated in subunit movement. May contact the P site tRNA; the 5S rRNA and some of its associated proteins might help stabilize positioning of ribosome-bound tRNAs. In Aeropyrum pernix (strain ATCC 700893 / DSM 11879 / JCM 9820 / NBRC 100138 / K1), this protein is Large ribosomal subunit protein uL5.